Reading from the N-terminus, the 124-residue chain is Cytoinsectotoxin-4 (124 aa).

Positions 1 to 19 are cleaved as a signal peptide; it reads MKCFILAAALVLAFACIAA. Positions 20–62 are excised as a propeptide; sequence SEPAETENEDLDDLSDLEDEEWLDELEEAAEYLESLREFEESR. At phenylalanine 123 the chain carries Phenylalanine amide.

Belongs to the cationic peptide 06 (cytoinsectotoxin) family. As to expression, expressed by the venom gland.

It localises to the secreted. Insecticidal and antimicrobial peptide. Has insecticidal activity against larvae of flesh fly S.carnaria. Has antibacterial activity against Gram-positive bacterium B.subtilis B-501 (MIC=2.5 uM) and Gram-negative bacterium E.coli DH5alpha (MIC=10 uM). In Lachesana tarabaevi (Spider), this protein is Cytoinsectotoxin-4.